Reading from the N-terminus, the 2701-residue chain is Centromere-associated protein E (2701 aa).

Residues 6–329 enclose the Kinesin motor domain; that stretch reads AVAVCVRVRP…LQFASTAKYM (324 aa). Residue 86–93 coordinates ATP; the sequence is GQTASGKT. A coiled-coil region spans residues 336–2590; that stretch reads NEVSTDEALL…SNEVKTWKER (2255 aa). 2 positions are modified to phosphoserine: S611 and S2083. The tract at residues 2126–2476 is kinetochore-binding domain; sequence KEIEFQKELS…IDLEKMKNAK (351 aa). Residues 2355-2376 are disordered; sequence SGAQVNPTTQDNKNPHVTSRAT. Residue S2389 is modified to Phosphoserine. Residues 2508-2527 show a composition bias toward polar residues; the sequence is QAQDTSVISEHTDPQPSNKP. Disordered stretches follow at residues 2508–2533 and 2588–2701; these read QAQD…CGGG and KERT…CKTQ. Residues 2510-2698 are globular autoinhibitory domain; it reads QDTSVISEHT…ASSGKDVPEC (189 aa). Residues 2588–2600 show a composition bias toward basic and acidic residues; the sequence is KERTLKREAHKQV. Residues 2601–2625 are compositionally biased toward polar residues; the sequence is TCENSPKSPKVTGTASKKKQITPSQ. The segment covering 2626 to 2640 has biased composition (basic and acidic residues); the sequence is CKERNLQDPVPKESP. 3 positions are modified to phosphoserine: S2639, S2647, and S2651. The residue at position 2698 (C2698) is a Cysteine methyl ester. C2698 carries the S-farnesyl cysteine lipid modification. A propeptide spans 2699–2701 (removed in mature form); the sequence is KTQ.

It belongs to the TRAFAC class myosin-kinesin ATPase superfamily. Kinesin family. As to quaternary structure, monomer. Interacts with CENPF. Interacts with BUB1B. Interacts with SEPT7. Interacts with KIF18A. Interacts with PRC1. Interacts with NUF2; this interaction determines kinetochore localization. Interacts with SKAP; this interaction greatly favors SKAP binding to microtubules. Interacts with TRAPPC12. Interacts with CTCF. The C-terminal inhibitory domain is phosphorylated. Phosphorylation relieves autoinhibition of the kinetochore motor. Post-translationally, sumoylated with SUMO2 and SUMO3. The sumoylation mediates the association to the kinetochore.

Its subcellular location is the chromosome. It localises to the centromere. The protein localises to the kinetochore. It is found in the cytoplasm. The protein resides in the cytoskeleton. Its subcellular location is the spindle. Microtubule plus-end-directed kinetochore motor which plays an important role in chromosome congression, microtubule-kinetochore conjugation and spindle assembly checkpoint activation. Drives chromosome congression (alignment of chromosomes at the spindle equator resulting in the formation of the metaphase plate) by mediating the lateral sliding of polar chromosomes along spindle microtubules towards the spindle equator and by aiding the establishment and maintenance of connections between kinetochores and spindle microtubules. The transport of pole-proximal chromosomes towards the spindle equator is favored by microtubule tracks that are detyrosinated. Acts as a processive bi-directional tracker of dynamic microtubule tips; after chromosomes have congressed, continues to play an active role at kinetochores, enhancing their links with dynamic microtubule ends. Suppresses chromosome congression in NDC80-depleted cells and contributes positively to congression only when microtubules are stabilized. Plays an important role in the formation of stable attachments between kinetochores and spindle microtubules The stabilization of kinetochore-microtubule attachment also requires CENPE-dependent localization of other proteins to the kinetochore including BUB1B, MAD1 and MAD2. Plays a role in spindle assembly checkpoint activation (SAC) via its interaction with BUB1B resulting in the activation of its kinase activity, which is important for activating SAC. Necessary for the mitotic checkpoint signal at individual kinetochores to prevent aneuploidy due to single chromosome loss. In Homo sapiens (Human), this protein is Centromere-associated protein E (CENPE).